The sequence spans 225 residues: Orotate phosphoribosyltransferase (225 aa).

Lys-31 is a binding site for 5-phospho-alpha-D-ribose 1-diphosphate. Residue 39 to 40 coordinates orotate; the sequence is FF. 5-phospho-alpha-D-ribose 1-diphosphate is bound by residues 78 to 79, Arg-105, Lys-106, Lys-109, His-111, and 130 to 138; these read YK and DDVLTSGKA. 2 residues coordinate orotate: Thr-134 and Arg-163.

The protein belongs to the purine/pyrimidine phosphoribosyltransferase family. PyrE subfamily. In terms of assembly, homodimer.

It catalyses the reaction orotidine 5'-phosphate + diphosphate = orotate + 5-phospho-alpha-D-ribose 1-diphosphate. Its pathway is pyrimidine metabolism; UMP biosynthesis via de novo pathway; UMP from orotate: step 1/2. In terms of biological role, catalyzes the transfer of a ribosyl phosphate group from 5-phosphoribose 1-diphosphate to orotate, leading to the formation of orotidine monophosphate (OMP). This chain is Orotate phosphoribosyltransferase (URA5), found in Cryptococcus neoformans var. neoformans serotype D (strain B-3501A) (Filobasidiella neoformans).